A 549-amino-acid chain; its full sequence is Cation/acetate symporter ActP (549 aa).

Helical transmembrane passes span W33–A53, L77–F97, G103–E123, I148–G168, I183–A203, W206–V226, I262–L282, G303–V323, L355–L375, V404–E424, I428–L448, G464–V484, and I493–F513.

Belongs to the sodium:solute symporter (SSF) (TC 2.A.21) family.

The protein resides in the cell inner membrane. Transports acetate. This is Cation/acetate symporter ActP from Escherichia coli O17:K52:H18 (strain UMN026 / ExPEC).